The primary structure comprises 301 residues: MVRADRDRWDLATSVGATATMVAAQRALAADPRYALIDDPYAAPLVRAVGMDVYTRLVDWQIPVEGDSEFDPQRMATGMACRTRFFDQFFLDATHSGIGQFVILASGLDARAYRLAWPVGSIVYEVDMPEVIEFKTATLSDLGAEPATERRTVAVDLRDDWATALQTAGFDPKVPAAWSAEGLLVYLPVEAQDALFDNITALSAPGSRLAFEFVPDTAIFADERWRNYHNRMSELGFDIDLNELVYHGQRGHVLDYLTRDGWQTSALTVTQLYEANGFAYPDDELATAFADLTYSSATLMR.

Residues Asp-127 and 156–157 (DL) contribute to the S-adenosyl-L-methionine site.

The protein belongs to the UPF0677 family.

Its function is as follows. Exhibits S-adenosyl-L-methionine-dependent methyltransferase activity. The polypeptide is Putative S-adenosyl-L-methionine-dependent methyltransferase MT0851 (Mycobacterium tuberculosis (strain CDC 1551 / Oshkosh)).